A 362-amino-acid polypeptide reads, in one-letter code: MSHNSFGHLFRVTTWGESHGPAIGCVVDGCPPGIPLTEADIQPALDRRRPGQSRFTTQRREADQVRILSGTFEGVTTGTPIALEIQNTDQRSKDYGDIAQRYRPGHADLTYDLKYGIRDYRGGGRSSARETACRVAAGEVARKILGAGITIRAALVRIGPHGIDRSRWDWSQIEANPFFCPDPVAAEQWAVYLDEIRKRGSSVGAVVEVIAEGVPAGLGAPLYGKLDSDLAAALMSINAVKGVEIGDGFDAATLTGEDNADEILAAPNEAGGPHIFGSNHAGGILGGISSGQPVVARFAVKPTSSILIPRRSVGRDGQPVEVITKGRHDPCVGIRAVPVGEAMVACVLADHLLRDRAQNGPR.

R48 and R54 together coordinate NADP(+). FMN-binding positions include 125–127 (RSS), 238–239 (NA), G286, 301–305 (KPTSS), and R327.

The protein belongs to the chorismate synthase family. In terms of assembly, homotetramer. The cofactor is FMNH2.

It carries out the reaction 5-O-(1-carboxyvinyl)-3-phosphoshikimate = chorismate + phosphate. It participates in metabolic intermediate biosynthesis; chorismate biosynthesis; chorismate from D-erythrose 4-phosphate and phosphoenolpyruvate: step 7/7. Functionally, catalyzes the anti-1,4-elimination of the C-3 phosphate and the C-6 proR hydrogen from 5-enolpyruvylshikimate-3-phosphate (EPSP) to yield chorismate, which is the branch point compound that serves as the starting substrate for the three terminal pathways of aromatic amino acid biosynthesis. This reaction introduces a second double bond into the aromatic ring system. The polypeptide is Chorismate synthase (Granulibacter bethesdensis (strain ATCC BAA-1260 / CGDNIH1)).